Reading from the N-terminus, the 308-residue chain is Probable GTP 3',8-cyclase (308 aa).

Positions 4–224 (RFGRPLEDLR…QIRKKHFRPR (221 aa)) constitute a Radical SAM core domain. Arg-13 is a binding site for GTP. The [4Fe-4S] cluster site is built by Cys-20, Cys-24, and Cys-27. Lys-60 contacts GTP. Residue Gly-64 participates in S-adenosyl-L-methionine binding. Thr-90 contacts GTP. Residue Ser-114 participates in S-adenosyl-L-methionine binding. Lys-151 provides a ligand contact to GTP. Cys-245 and Cys-248 together coordinate [4Fe-4S] cluster. 250–252 (RIR) is a GTP binding site. [4Fe-4S] cluster is bound at residue Cys-262.

Belongs to the radical SAM superfamily. MoaA family. Requires [4Fe-4S] cluster as cofactor.

The enzyme catalyses GTP + AH2 + S-adenosyl-L-methionine = (8S)-3',8-cyclo-7,8-dihydroguanosine 5'-triphosphate + 5'-deoxyadenosine + L-methionine + A + H(+). Its pathway is cofactor biosynthesis; molybdopterin biosynthesis. Its function is as follows. Catalyzes the cyclization of GTP to (8S)-3',8-cyclo-7,8-dihydroguanosine 5'-triphosphate. In Saccharolobus islandicus (strain M.16.27) (Sulfolobus islandicus), this protein is Probable GTP 3',8-cyclase.